Reading from the N-terminus, the 39-residue chain is TVIDVKCTSPKQCLPPCKAQFGIRAGAKCMNGKCKCYPH.

Intrachain disulfides connect Cys-7-Cys-29, Cys-13-Cys-34, and Cys-17-Cys-36.

It belongs to the short scorpion toxin superfamily. Potassium channel inhibitor family. Alpha-KTx 02 subfamily. Expressed by the venom gland.

The protein localises to the secreted. Potent selective inhibitor of Kv1.1/KCNA1, Kv1.2/KCNA2, Kv1.3/KCNA3 voltage-gated potassium channels. Weak inhibitor of Kv1.6/KCNA6 potassium channel. It also shows a weak interaction with nicotinic acetylcholine receptors (nAChR), suggesting it may weakly inhibit it. In Centruroides limbatus (Bark scorpion), this protein is Potassium channel toxin alpha-KTx 2.5.